The sequence spans 189 residues: Thymidylate kinase (189 aa).

Residue 7–14 (GIDTAGKS) participates in ATP binding.

This sequence belongs to the thymidylate kinase family.

The catalysed reaction is dTMP + ATP = dTDP + ADP. In terms of biological role, phosphorylation of dTMP to form dTDP in both de novo and salvage pathways of dTTP synthesis. The protein is Thymidylate kinase of Aliarcobacter butzleri (strain RM4018) (Arcobacter butzleri).